Here is a 93-residue protein sequence, read N- to C-terminus: Cobalt transport protein CbiN (93 aa).

2 consecutive transmembrane segments (helical) span residues L5–G25 and L63–C83.

This sequence belongs to the CbiN family. Forms an energy-coupling factor (ECF) transporter complex composed of an ATP-binding protein (A component, CbiO), a transmembrane protein (T component, CbiQ) and 2 possible substrate-capture proteins (S components, CbiM and CbiN) of unknown stoichimetry.

The protein resides in the cell inner membrane. The protein operates within cofactor biosynthesis; adenosylcobalamin biosynthesis. Part of the energy-coupling factor (ECF) transporter complex CbiMNOQ involved in cobalt import. The protein is Cobalt transport protein CbiN of Salmonella agona (strain SL483).